The chain runs to 205 residues: Heme-binding protein 2 (205 aa).

The segment at 1 to 39 (MAEPLQPDPGAAEDAAAQAVETPGWKAPEDAGPQPGSYE) is disordered. Alanine 2 bears the N-acetylalanine mark. At serine 181 the chain carries Phosphoserine.

It belongs to the HEBP family. Monomer. Interacts with LRPPRC. May interact with BCL2L1; an interaction with BCL2L1 was observed using a peptide, but not with the full-length protein. The full-length protein would have to undergo a major conformation change for the interaction to occur. Interacts with PDCD6. As to expression, detected in placenta.

The protein localises to the cytoplasm. The protein resides in the mitochondrion. In terms of biological role, can promote mitochondrial permeability transition and facilitate necrotic cell death under different types of stress conditions. The chain is Heme-binding protein 2 (HEBP2) from Homo sapiens (Human).